The primary structure comprises 272 residues: Undecaprenyl-diphosphatase (272 aa).

A run of 8 helical transmembrane segments spans residues 4 to 24, 45 to 65, 89 to 109, 115 to 135, 152 to 174, 189 to 209, 225 to 245, and 251 to 271; these read IHSL…EFLP, AETF…VMFW, LTLG…LVFH, LFNP…LIAA, TYRQ…FSRS, YAAS…ATAL, MFAV…KTFL, and ISFI…YVVF.

Belongs to the UppP family.

Its subcellular location is the cell inner membrane. It catalyses the reaction di-trans,octa-cis-undecaprenyl diphosphate + H2O = di-trans,octa-cis-undecaprenyl phosphate + phosphate + H(+). In terms of biological role, catalyzes the dephosphorylation of undecaprenyl diphosphate (UPP). Confers resistance to bacitracin. The polypeptide is Undecaprenyl-diphosphatase (Citrobacter koseri (strain ATCC BAA-895 / CDC 4225-83 / SGSC4696)).